The primary structure comprises 85 residues: ATP synthase subunit c (85 aa).

The next 2 membrane-spanning stretches (helical) occupy residues 10–30 and 53–73; these read IAVA…FGLL and FIVA…ALFF.

This sequence belongs to the ATPase C chain family. In terms of assembly, F-type ATPases have 2 components, F(1) - the catalytic core - and F(0) - the membrane proton channel. F(1) has five subunits: alpha(3), beta(3), gamma(1), delta(1), epsilon(1). F(0) has three main subunits: a(1), b(2) and c(10-14). The alpha and beta chains form an alternating ring which encloses part of the gamma chain. F(1) is attached to F(0) by a central stalk formed by the gamma and epsilon chains, while a peripheral stalk is formed by the delta and b chains.

The protein resides in the cell inner membrane. Functionally, f(1)F(0) ATP synthase produces ATP from ADP in the presence of a proton or sodium gradient. F-type ATPases consist of two structural domains, F(1) containing the extramembraneous catalytic core and F(0) containing the membrane proton channel, linked together by a central stalk and a peripheral stalk. During catalysis, ATP synthesis in the catalytic domain of F(1) is coupled via a rotary mechanism of the central stalk subunits to proton translocation. Its function is as follows. Key component of the F(0) channel; it plays a direct role in translocation across the membrane. A homomeric c-ring of between 10-14 subunits forms the central stalk rotor element with the F(1) delta and epsilon subunits. This Pseudomonas syringae pv. syringae (strain B728a) protein is ATP synthase subunit c.